The primary structure comprises 177 residues: MSRVGKKPIAVPSGVDFSVKDNVVTVKGPKGTLTKEFNNNITIKLEDGHITVERPNDEPFMRAIHGTTRALINNMVKGVHEGYRKTLTLVGVGYRAATKGKGLEISLGYSHPVIIDEIPGITFSVEKNTTIHIDGVEKELVGQVAANIRAKRPPEPYKGKGVKYADEHIRRKEGKKS.

The interval 151–177 is disordered; it reads KRPPEPYKGKGVKYADEHIRRKEGKKS. Over residues 152-177 the composition is skewed to basic and acidic residues; it reads RPPEPYKGKGVKYADEHIRRKEGKKS.

The protein belongs to the universal ribosomal protein uL6 family. As to quaternary structure, part of the 50S ribosomal subunit.

Functionally, this protein binds to the 23S rRNA, and is important in its secondary structure. It is located near the subunit interface in the base of the L7/L12 stalk, and near the tRNA binding site of the peptidyltransferase center. This is Large ribosomal subunit protein uL6 from Fusobacterium nucleatum subsp. nucleatum (strain ATCC 25586 / DSM 15643 / BCRC 10681 / CIP 101130 / JCM 8532 / KCTC 2640 / LMG 13131 / VPI 4355).